Consider the following 257-residue polypeptide: Snake venom serine protease nikobin (257 aa).

The first 18 residues, 1 to 18, serve as a signal peptide directing secretion; sequence MVLIRVLANLLLLQLSYA. A propeptide spanning residues 19-24 is cleaved from the precursor; that stretch reads QKSSEL. The 224-residue stretch at 25–248 folds into the Peptidase S1 domain; it reads VIGGDECNIN…YSDWIQSIIA (224 aa). Intrachain disulfides connect cysteine 31-cysteine 162, cysteine 49-cysteine 65, cysteine 97-cysteine 255, cysteine 141-cysteine 209, cysteine 173-cysteine 188, and cysteine 199-cysteine 224. Catalysis depends on charge relay system residues histidine 64 and aspartate 109. N-linked (GlcNAc...) asparagine glycosylation is found at asparagine 120 and asparagine 121. Serine 203 acts as the Charge relay system in catalysis. An N-linked (GlcNAc...) asparagine glycan is attached at asparagine 250.

This sequence belongs to the peptidase S1 family. Snake venom subfamily. As to quaternary structure, monomer. In terms of tissue distribution, expressed by the venom gland.

It localises to the secreted. Its function is as follows. Snake venom serine protease that may act in the hemostasis system of the prey. This chain is Snake venom serine protease nikobin (sp-VN), found in Vipera nikolskii (Nikolsky's adder).